A 1431-amino-acid polypeptide reads, in one-letter code: Collagen alpha-1(XVII) chain (1431 aa).

The Cytoplasmic portion of the chain corresponds to 1-468 (MDVTKKNKRD…AWCPCGSCCS (468 aa)). The segment at 1–569 (MDVTKKNKRD…MTEQENGNLR (569 aa)) is nonhelical region (NC16). Disordered regions lie at residues 25–155 (TRLT…PSTR), 167–188 (KGSRSASASPTRNTSSTLPIPK), 304–324 (TAYGVKKNVPQPPTVTSTGVS), and 422–449 (SVENHNYDRGGGSGGGARGGGGSGGGGG). Over residues 60-74 (GSSGYINSSGSIRGN) the composition is skewed to low complexity. Polar residues-rich tracts occupy residues 75–96 (ASTSSYRRAHSPASTLPNSPGS), 111–120 (EGSSSGNSSP), and 170–184 (RSASASPTRNTSSTL). The interval 146 to 231 (RLQSASPSTR…WSSTLPAGSS (86 aa)) is necessary for interaction with DST and for the recruitment of DST to hemidesmosome. Residues 430 to 449 (RGGGSGGGARGGGGSGGGGG) are compositionally biased toward gly residues. Residues 469–489 (WWKWLLGLLLTWLLLLGLLFG) form a helical; Signal-anchor for type II membrane protein membrane-spanning segment. The Extracellular segment spans residues 490–1431 (LIALAEEVRK…RRRRSIAIKP (942 aa)). Residue serine 547 is modified to Phosphoserine; by CK2. Disordered stretches follow at residues 564–869 (ENGN…SFIS), 884–996 (DLRG…SSSG), 1158–1178 (DIIGPPGPPGPPGPRGPPGVS), and 1208–1249 (FIIG…SSSV). The segment at 570-1417 (GNPGPKGDMG…KGDKGDKGDQ (848 aa)) is triple-helical region. 3 stretches are compositionally biased toward low complexity: residues 657–673 (PRGLPGVPGSVGPRGPN), 738–751 (EPGAKGAMGPAGPD), and 778–799 (PGKPGVTGPQGPQGLPGSPGRP). 6 stretches are compositionally biased toward pro residues: residues 823-844 (PGPPGPPGAMGPPGPSGTPGPA), 889-911 (LGPPGPRGPPGPSIPGPPGPRGP), 937-946 (PPGPPGPPGP), 979-989 (PPGPPGPPGPP), 1162-1174 (PPGPPGPPGPRGP), and 1212-1221 (PPGPPGPQGP). The N-linked (GlcNAc...) asparagine glycan is linked to asparagine 1230. A compositionally biased stretch (polar residues) spans 1232 to 1249 (SWGSSSSARRGTAYSSSV). Residue asparagine 1356 is glycosylated (N-linked (GlcNAc...) asparagine). The interval 1366–1431 (RTHGAIPGPP…RRRRSIAIKP (66 aa)) is disordered. Positions 1407 to 1416 (QKGDKGDKGD) are enriched in basic and acidic residues. The tract at residues 1418 to 1431 (VYTGRRRRSIAIKP) is nonhelical region (NC1). Over residues 1421–1431 (GRRRRSIAIKP) the composition is skewed to basic residues.

In terms of assembly, homotrimers of alpha 1(XVII)chains. Interacts (via cytoplasmic region) with ITGB4 (via cytoplasmic region). Interacts (via cytoplasmic region) with DST (via N-terminus). Interacts (via N-terminus) with PLEC. Interacts (via cytoplasmic region) with DSP. In terms of processing, the intracellular/endo domain is disulfide-linked. Post-translationally, prolines at the third position of the tripeptide repeating unit (G-X-Y) are hydroxylated in some or all of the chains. The ectodomain is shedded from the surface of keratinocytes resulting in a 120-kDa soluble form, also named as 120 kDa linear IgA disease antigen homolog. The shedding is mediated by membrane-bound metalloproteases. This cleavage is inhibited by phosphorylation at Ser-547.

It localises to the cell junction. Its subcellular location is the hemidesmosome. The protein resides in the membrane. It is found in the secreted. The protein localises to the extracellular space. It localises to the extracellular matrix. Its subcellular location is the basement membrane. In terms of biological role, may play a role in the integrity of hemidesmosome and the attachment of basal keratinocytes to the underlying basement membrane. Its function is as follows. The 120 kDa linear IgA disease antigen homolog is an anchoring filament component involved in dermal-epidermal cohesion. The polypeptide is Collagen alpha-1(XVII) chain (COL17A1) (Mesocricetus auratus (Golden hamster)).